The primary structure comprises 417 residues: Serine--tRNA ligase (417 aa).

232–234 (TSE) contacts L-serine. 263–265 (RKE) contributes to the ATP binding site. Glu286 is a binding site for L-serine. 350–353 (EISS) is an ATP binding site. Position 385 (Ser385) interacts with L-serine.

The protein belongs to the class-II aminoacyl-tRNA synthetase family. Type-1 seryl-tRNA synthetase subfamily. In terms of assembly, homodimer. The tRNA molecule binds across the dimer.

The protein localises to the cytoplasm. The catalysed reaction is tRNA(Ser) + L-serine + ATP = L-seryl-tRNA(Ser) + AMP + diphosphate + H(+). It carries out the reaction tRNA(Sec) + L-serine + ATP = L-seryl-tRNA(Sec) + AMP + diphosphate + H(+). The protein operates within aminoacyl-tRNA biosynthesis; selenocysteinyl-tRNA(Sec) biosynthesis; L-seryl-tRNA(Sec) from L-serine and tRNA(Sec): step 1/1. In terms of biological role, catalyzes the attachment of serine to tRNA(Ser). Is also able to aminoacylate tRNA(Sec) with serine, to form the misacylated tRNA L-seryl-tRNA(Sec), which will be further converted into selenocysteinyl-tRNA(Sec). The protein is Serine--tRNA ligase of Campylobacter hominis (strain ATCC BAA-381 / DSM 21671 / CCUG 45161 / LMG 19568 / NCTC 13146 / CH001A).